The chain runs to 292 residues: MGRQKELVNRCGEMLHIRYRLLRQALAECLGTLILVMFGCGSVAQVVLSRGTHGGFLTINLAFGFAVTLGILIAGQVSGAHLNPAVTFAMCFLAREPWIKLPVYTLAQTLGAFLGAGIIFGLYYDAIWAFANNQLIVSGPNGTAGIFATYPSGHLDMVNGFFDQFIGTASLIVCVLAIVDPYNNPVPRGLEAFTVGLVVLVIGTSMGFNSGYAVNPARDFGPRLFTAIAGWGSEVFTTGRHWWWVPIVSPLLGSIAGVFVYQLMIGCHLEPPPPSTDEENVKLSHVKHKEQM.

Residues 1 to 24 (MGRQKELVNRCGEMLHIRYRLLRQ) are Cytoplasmic-facing. Residues 25–42 (ALAECLGTLILVMFGCGS) traverse the membrane as a helical segment. Residues 43 to 56 (VAQVVLSRGTHGGF) lie on the Extracellular side of the membrane. The helical transmembrane segment at 57 to 74 (LTINLAFGFAVTLGILIA) threads the bilayer. Over 75–78 (GQVS) the chain is Cytoplasmic. The segment at residues 79-92 (GAHLNPAVTFAMCF) is an intramembrane region (discontinuously helical). Residues 83–85 (NPA) carry the NPA 1 motif. Residues 93–100 (LAREPWIK) lie on the Cytoplasmic side of the membrane. A helical membrane pass occupies residues 101–121 (LPVYTLAQTLGAFLGAGIIFG). Residues 122-159 (LYYDAIWAFANNQLIVSGPNGTAGIFATYPSGHLDMVN) are Extracellular-facing. Asparagine 141 carries an N-linked (GlcNAc...) asparagine glycan. A helical transmembrane segment spans residues 160–177 (GFFDQFIGTASLIVCVLA). Over 178 to 189 (IVDPYNNPVPRG) the chain is Cytoplasmic. Residues 190 to 206 (LEAFTVGLVVLVIGTSM) traverse the membrane as a helical segment. Topologically, residues 207–210 (GFNS) are extracellular. Positions 211 to 224 (GYAVNPARDFGPRL) form an intramembrane region, discontinuously helical. Positions 215–217 (NPA) match the NPA 2 motif. The Extracellular segment spans residues 225–242 (FTAIAGWGSEVFTTGRHW). A helical membrane pass occupies residues 243–264 (WWVPIVSPLLGSIAGVFVYQLM). Over 265-292 (IGCHLEPPPPSTDEENVKLSHVKHKEQM) the chain is Cytoplasmic.

This sequence belongs to the MIP/aquaporin (TC 1.A.8) family. Homotetramer; each monomer provides an independent glycerol/water pore. Could also exist in other oligomeric states.

The protein resides in the cell membrane. It is found in the basolateral cell membrane. The catalysed reaction is glycerol(in) = glycerol(out). The enzyme catalyses H2O(in) = H2O(out). It catalyses the reaction urea(in) = urea(out). It carries out the reaction H2O2(out) = H2O2(in). Functionally, aquaglyceroporins form homotetrameric transmembrane channels, with each monomer independently mediating glycerol and water transport across the plasma membrane along their osmotic gradient. Could also be permeable to urea. Also participates in cell permeability to H2O2 and H2O2-mediated signaling. In skin, transports glycerol to the epidermis and stratum corneum, where it maintains hydration, elasticity, and supports lipid biosynthesis for barrier repair. In kidney, contributes to the reabsorption of water, helping the body maintain proper fluid balance. The chain is Aquaporin-3 from Bos taurus (Bovine).